The sequence spans 154 residues: Large ribosomal subunit protein uL22c (154 aa).

The protein belongs to the universal ribosomal protein uL22 family. In terms of assembly, part of the 50S ribosomal subunit.

The protein localises to the plastid. It localises to the chloroplast. In terms of biological role, this protein binds specifically to 23S rRNA. Its function is as follows. The globular domain of the protein is located near the polypeptide exit tunnel on the outside of the subunit, while an extended beta-hairpin is found that lines the wall of the exit tunnel in the center of the 70S ribosome. The sequence is that of Large ribosomal subunit protein uL22c (rpl22) from Helianthus annuus (Common sunflower).